Reading from the N-terminus, the 269-residue chain is tRNA pseudouridine synthase A (269 aa).

D55 (nucleophile) is an active-site residue. Position 111 (Y111) interacts with substrate.

The protein belongs to the tRNA pseudouridine synthase TruA family.

The enzyme catalyses uridine(38/39/40) in tRNA = pseudouridine(38/39/40) in tRNA. Its function is as follows. Formation of pseudouridine at positions 38, 39 and 40 in the anticodon stem and loop of transfer RNAs. This is tRNA pseudouridine synthase A from Methanosarcina mazei (strain ATCC BAA-159 / DSM 3647 / Goe1 / Go1 / JCM 11833 / OCM 88) (Methanosarcina frisia).